Here is a 90-residue protein sequence, read N- to C-terminus: UPF0237 protein MJ1558 (90 aa).

One can recognise an ACT domain in the interval 5–79; that stretch reads VVSVIGQDRT…EELGVQVIVQ (75 aa).

The protein belongs to the UPF0237 family.

This Methanocaldococcus jannaschii (strain ATCC 43067 / DSM 2661 / JAL-1 / JCM 10045 / NBRC 100440) (Methanococcus jannaschii) protein is UPF0237 protein MJ1558.